Consider the following 396-residue polypeptide: NADH-quinone oxidoreductase subunit D 2 (396 aa).

This sequence belongs to the complex I 49 kDa subunit family. In terms of assembly, NDH-1 is composed of 14 different subunits. Subunits NuoB, C, D, E, F, and G constitute the peripheral sector of the complex.

It localises to the cell inner membrane. It carries out the reaction a quinone + NADH + 5 H(+)(in) = a quinol + NAD(+) + 4 H(+)(out). In terms of biological role, NDH-1 shuttles electrons from NADH, via FMN and iron-sulfur (Fe-S) centers, to quinones in the respiratory chain. The immediate electron acceptor for the enzyme in this species is believed to be ubiquinone. Couples the redox reaction to proton translocation (for every two electrons transferred, four hydrogen ions are translocated across the cytoplasmic membrane), and thus conserves the redox energy in a proton gradient. This chain is NADH-quinone oxidoreductase subunit D 2, found in Beijerinckia indica subsp. indica (strain ATCC 9039 / DSM 1715 / NCIMB 8712).